A 237-amino-acid chain; its full sequence is 1-(5-phosphoribosyl)-5-[(5-phosphoribosylamino)methylideneamino] imidazole-4-carboxamide isomerase (237 aa).

The active-site Proton acceptor is the aspartate 8. Aspartate 129 functions as the Proton donor in the catalytic mechanism.

This sequence belongs to the HisA/HisF family.

It localises to the cytoplasm. It carries out the reaction 1-(5-phospho-beta-D-ribosyl)-5-[(5-phospho-beta-D-ribosylamino)methylideneamino]imidazole-4-carboxamide = 5-[(5-phospho-1-deoxy-D-ribulos-1-ylimino)methylamino]-1-(5-phospho-beta-D-ribosyl)imidazole-4-carboxamide. The protein operates within amino-acid biosynthesis; L-histidine biosynthesis; L-histidine from 5-phospho-alpha-D-ribose 1-diphosphate: step 4/9. The chain is 1-(5-phosphoribosyl)-5-[(5-phosphoribosylamino)methylideneamino] imidazole-4-carboxamide isomerase from Roseiflexus castenholzii (strain DSM 13941 / HLO8).